The sequence spans 243 residues: UPF0758 protein MAE_44350 (243 aa).

One can recognise an MPN domain in the interval 113–235; sequence VIDSPDTAAA…FQSLRQITDL (123 aa). 3 residues coordinate Zn(2+): histidine 184, histidine 186, and aspartate 197. The JAMM motif signature appears at 184 to 197; that stretch reads HNHPTGSLVPSQDD.

Belongs to the UPF0758 family.

The polypeptide is UPF0758 protein MAE_44350 (Microcystis aeruginosa (strain NIES-843 / IAM M-2473)).